A 257-amino-acid chain; its full sequence is MKEKLTIIKVGGKIVEEESTLNQLLADFSAIEGYKLLVHGGGRSATRLAAQLGIESKMVNGRRITDAETLKVVTMVYGGLVNKNIVAGLQAKGVNAIGLTGADMNVIRSVKRPVKDVDYGFVGDVEKVNAGFLAALIRQGIVPVMAPLTHDGKGSMLNTNADTIAGETAKALASLFDVTLVYCFEKKGVLRDENDDDSVIPVITPEEFKEFVAQGIIQGGMIPKLENSFSAIDAGVSQVVITLASAINEGSGTVIKK.

Substrate contacts are provided by residues 41 to 42 (GG), Arg-63, and Asn-158.

Belongs to the acetylglutamate kinase family. ArgB subfamily.

It is found in the cytoplasm. The catalysed reaction is N-acetyl-L-glutamate + ATP = N-acetyl-L-glutamyl 5-phosphate + ADP. It participates in amino-acid biosynthesis; L-arginine biosynthesis; N(2)-acetyl-L-ornithine from L-glutamate: step 2/4. Catalyzes the ATP-dependent phosphorylation of N-acetyl-L-glutamate. The chain is Acetylglutamate kinase from Phocaeicola vulgatus (strain ATCC 8482 / DSM 1447 / JCM 5826 / CCUG 4940 / NBRC 14291 / NCTC 11154) (Bacteroides vulgatus).